Consider the following 473-residue polypeptide: Ribulose bisphosphate carboxylase large chain (473 aa).

Positions 1–2 are excised as a propeptide; sequence MS. N-acetylproline is present on P3. At K14 the chain carries N6,N6,N6-trimethyllysine. Positions 123 and 173 each coordinate substrate. Residue K175 is the Proton acceptor of the active site. A substrate-binding site is contributed by K177. Mg(2+) contacts are provided by K201, D203, and E204. K201 carries the post-translational modification N6-carboxylysine. H294 serves as the catalytic Proton acceptor. Substrate is bound by residues R295, H327, and S379.

It belongs to the RuBisCO large chain family. Type I subfamily. As to quaternary structure, heterohexadecamer of 8 large chains and 8 small chains; disulfide-linked. The disulfide link is formed within the large subunit homodimers. Mg(2+) is required as a cofactor. In terms of processing, the disulfide bond which can form in the large chain dimeric partners within the hexadecamer appears to be associated with oxidative stress and protein turnover.

It localises to the plastid. Its subcellular location is the chloroplast. The enzyme catalyses 2 (2R)-3-phosphoglycerate + 2 H(+) = D-ribulose 1,5-bisphosphate + CO2 + H2O. It carries out the reaction D-ribulose 1,5-bisphosphate + O2 = 2-phosphoglycolate + (2R)-3-phosphoglycerate + 2 H(+). Its function is as follows. RuBisCO catalyzes two reactions: the carboxylation of D-ribulose 1,5-bisphosphate, the primary event in carbon dioxide fixation, as well as the oxidative fragmentation of the pentose substrate in the photorespiration process. Both reactions occur simultaneously and in competition at the same active site. The sequence is that of Ribulose bisphosphate carboxylase large chain from Cajanus cajan (Pigeon pea).